The following is a 276-amino-acid chain: NADPH-dependent 7-cyano-7-deazaguanine reductase (276 aa).

Residue 83–85 coordinates substrate; the sequence is IES. NADPH is bound at residue 85–86; it reads SK. Cysteine 184 (thioimide intermediate) is an active-site residue. The active-site Proton donor is the aspartate 191. Substrate is bound at residue 223 to 224; it reads HE. An NADPH-binding site is contributed by 252–253; that stretch reads RG.

The protein belongs to the GTP cyclohydrolase I family. QueF type 2 subfamily. In terms of assembly, homodimer.

It is found in the cytoplasm. The enzyme catalyses 7-aminomethyl-7-carbaguanine + 2 NADP(+) = 7-cyano-7-deazaguanine + 2 NADPH + 3 H(+). The protein operates within tRNA modification; tRNA-queuosine biosynthesis. Its function is as follows. Catalyzes the NADPH-dependent reduction of 7-cyano-7-deazaguanine (preQ0) to 7-aminomethyl-7-deazaguanine (preQ1). The protein is NADPH-dependent 7-cyano-7-deazaguanine reductase of Pseudomonas putida (strain ATCC 700007 / DSM 6899 / JCM 31910 / BCRC 17059 / LMG 24140 / F1).